The sequence spans 831 residues: Cadherin-related family member 5 (831 aa).

Positions 1–28 (MGAPALLWPSLLLPWLTVLFGQPPGTLA) are cleaved as a signal peptide. Residues 29-641 (QTQVCSVNQT…GQRFSTVDMA (613 aa)) are Extracellular-facing. 11 N-linked (GlcNAc...) asparagine glycosylation sites follow: Asn-36, Asn-45, Asn-84, Asn-135, Asn-143, Asn-173, Asn-201, Asn-287, Asn-311, Asn-408, and Asn-475. 4 Cadherin domains span residues 53-125 (VNIF…DNAP), 128-240 (SFEI…TPWF), 252-357 (IHAQ…PLQF), and 358-459 (SQSL…ERER). Positions 452–632 (IQVSERERTP…STGAGEQGDG (181 aa)) are disordered. Over residues 473–491 (SSNTTMEAPLTSGTSQRPA) the composition is skewed to polar residues. The span at 505 to 540 (GGTTLRPPTPASSIPGGSPTLGTSTSPQTTTPGGDS) shows a compositional bias: low complexity. Residues 541–554 (AQTPKPGTSHPTAP) are compositionally biased toward polar residues. Repeat copies occupy residues 541 to 571 (AQTPKPGTSHPTAPTSRTSTSLMTTSSRSDS) and 572 to 602 (TQTPKPGTSQPMVPIPGASTSSQPATPSGSS). A 3 X 31 AA approximate tandem repeats region spans residues 541-614 (AQTPKPGTSH…TPKPGTSQST (74 aa)). Low complexity predominate over residues 555-572 (TSRTSTSLMTTSSRSDST). Polar residues-rich tracts occupy residues 573-582 (QTPKPGTSQP) and 589-623 (ASTSSQPATPSGSSPQTPKPGTSQSTATGPISLPS). One copy of the 3; truncated repeat lies at 605 to 614 (TPKPGTSQST). The helical transmembrane segment at 642–662 (VLGGVLGALLLLALICLVILV) threads the bilayer. The Cytoplasmic segment spans residues 663–831 (HKHYRHRLAC…FGVDADNTYI (169 aa)). The tract at residues 663 to 831 (HKHYRHRLAC…FGVDADNTYI (169 aa)) is mediates interaction with USH1C and MYO7B and is required for proper localization to microvilli tips and function in microvilli organization. 2 disordered regions span residues 675-774 (GKAS…GGYK) and 793-831 (EPTADVDSASASGSEGSDDDDPDQKKTLRFGVDADNTYI). Phosphoserine occurs at positions 699, 721, and 725. Residues 716-738 (PLRPPSPMSSSPTPPSSTPPSPQ) show a composition bias toward pro residues. At Thr-728 the chain carries Phosphothreonine. A phosphoserine mark is found at Ser-736 and Ser-753. A compositionally biased stretch (basic and acidic residues) spans 761 to 771 (LTKERRPEGEG). Thr-795 bears the Phosphothreonine mark. Residues 797–807 (DVDSASASGSE) show a composition bias toward low complexity. Ser-802, Ser-804, and Ser-806 each carry phosphoserine.

Part of the IMAC/intermicrovillar adhesion complex/intermicrovillar tip-link complex composed of ANKS4B, MYO7B, USH1C, CDHR2 and CDHR5. Interacts (via cytoplasmic domain) with USH1C and MYO7B; required for proper localization of CDHR5 to microvilli tips and its function in brush border differentiation. N- and O-glycosylated.

The protein resides in the apical cell membrane. It localises to the cell projection. It is found in the microvillus membrane. In terms of biological role, intermicrovillar adhesion molecule that forms, via its extracellular domain, calcium-dependent heterophilic complexes with CDHR2 on adjacent microvilli. Thereby, controls the packing of microvilli at the apical membrane of epithelial cells. Through its cytoplasmic domain, interacts with microvillus cytoplasmic proteins to form the intermicrovillar adhesion complex/IMAC. This complex plays a central role in microvilli and epithelial brush border differentiation. The chain is Cadherin-related family member 5 from Mus musculus (Mouse).